We begin with the raw amino-acid sequence, 961 residues long: RNA polymerase II subunit A C-terminal domain phosphatase (961 aa).

Methionine 1 is subject to N-acetylmethionine. One can recognise an FCP1 homology domain in the interval histidine 178–valine 344. Residues aspartate 328–histidine 589 are disordered. A compositionally biased stretch (basic and acidic residues) spans aspartate 394–isoleucine 406. Serine 395 carries the post-translational modification Phosphoserine. The span at leucine 450–serine 462 shows a compositional bias: acidic residues. Positions glutamate 463–aspartate 475 are enriched in low complexity. The segment covering serine 575–aspartate 588 has biased composition (acidic residues). The BRCT domain occupies leucine 629–leucine 728. A phosphoserine mark is found at serine 674 and serine 740. Disordered stretches follow at residues aspartate 730 to proline 752 and lysine 780 to methionine 949. At lysine 780 the chain carries N6-acetyllysine. Over residues serine 793–serine 803 the composition is skewed to polar residues. Serine 839 carries the post-translational modification Phosphoserine. The span at cysteine 850–lysine 859 shows a compositional bias: basic and acidic residues. Acidic residues-rich tracts occupy residues glutamate 860–aspartate 873 and asparagine 937–aspartate 947. Serine 869 and serine 872 each carry phosphoserine.

As to quaternary structure, homodimer. Interacts with GTF2F1. Interacts with WDR77, SNRPB and SNRNP70. Phosphorylated. In the presence of TFIIF, the phosphorylated form has an increased CTD phosphatase activity. The phosphorylation is required for the physical interaction with GTF2F1. As to expression, ubiquitously expressed.

Its subcellular location is the nucleus. It is found in the cytoplasm. The protein resides in the cytoskeleton. It localises to the microtubule organizing center. The protein localises to the centrosome. Its subcellular location is the spindle pole. It is found in the midbody. It carries out the reaction O-phospho-L-seryl-[protein] + H2O = L-seryl-[protein] + phosphate. The enzyme catalyses O-phospho-L-threonyl-[protein] + H2O = L-threonyl-[protein] + phosphate. Its function is as follows. Processively dephosphorylates 'Ser-2' and 'Ser-5' of the heptad repeats YSPTSPS in the C-terminal domain of the largest RNA polymerase II subunit. This promotes the activity of RNA polymerase II. Plays a role in the exit from mitosis by dephosphorylating crucial mitotic substrates (USP44, CDC20 and WEE1) that are required for M-phase-promoting factor (MPF)/CDK1 inactivation. The chain is RNA polymerase II subunit A C-terminal domain phosphatase (CTDP1) from Homo sapiens (Human).